Here is a 297-residue protein sequence, read N- to C-terminus: uncharacterized protein (297 aa).

The helical transmembrane segment at 191-211 (VMIILSCSNITILAVLSIVGL) threads the bilayer. Residues 275–287 (SKTSETQSVSGST) show a composition bias toward polar residues. Residues 275–297 (SKTSETQSVSGSTHSDEKLTAPM) are disordered. The span at 288–297 (HSDEKLTAPM) shows a compositional bias: basic and acidic residues.

It is found in the host membrane. This is an uncharacterized protein from Cryphonectria parasitica mycoreovirus 1 (strain 9B21) (CpMYRV-1).